We begin with the raw amino-acid sequence, 470 residues long: Suppressor of SWI4 1 homolog (470 aa).

The Brix domain occupies proline 29–asparagine 292. Phosphoserine is present on residues serine 238 and serine 240. Disordered regions lie at residues serine 240–glutamine 264 and alanine 323–asparagine 470. The span at alanine 342 to arginine 355 shows a compositional bias: basic residues. Serine 362 is subject to Phosphoserine. N6-acetyllysine is present on lysine 441. Over residues glutamine 447 to alanine 457 the composition is skewed to basic residues.

It is found in the nucleus. The protein resides in the nucleolus. Its function is as follows. May have a role in cell growth. This chain is Suppressor of SWI4 1 homolog (Ppan), found in Mus musculus (Mouse).